Here is a 232-residue protein sequence, read N- to C-terminus: 2-C-methyl-D-erythritol 4-phosphate cytidylyltransferase (232 aa).

This sequence belongs to the IspD/TarI cytidylyltransferase family. IspD subfamily.

It carries out the reaction 2-C-methyl-D-erythritol 4-phosphate + CTP + H(+) = 4-CDP-2-C-methyl-D-erythritol + diphosphate. The protein operates within isoprenoid biosynthesis; isopentenyl diphosphate biosynthesis via DXP pathway; isopentenyl diphosphate from 1-deoxy-D-xylulose 5-phosphate: step 2/6. In terms of biological role, catalyzes the formation of 4-diphosphocytidyl-2-C-methyl-D-erythritol from CTP and 2-C-methyl-D-erythritol 4-phosphate (MEP). The polypeptide is 2-C-methyl-D-erythritol 4-phosphate cytidylyltransferase (Neorickettsia sennetsu (strain ATCC VR-367 / Miyayama) (Ehrlichia sennetsu)).